The following is a 275-amino-acid chain: Large ribosomal subunit protein uL2 (275 aa).

The tract at residues 221 to 275 (VRGVAMNPVDHPMGGGEGKSSGGRHPCSPWGQQSKGVRTRNNKRTDQFIVKRRSK) is disordered.

It belongs to the universal ribosomal protein uL2 family. In terms of assembly, part of the 50S ribosomal subunit. Forms a bridge to the 30S subunit in the 70S ribosome.

Its function is as follows. One of the primary rRNA binding proteins. Required for association of the 30S and 50S subunits to form the 70S ribosome, for tRNA binding and peptide bond formation. It has been suggested to have peptidyltransferase activity; this is somewhat controversial. Makes several contacts with the 16S rRNA in the 70S ribosome. The chain is Large ribosomal subunit protein uL2 from Desulfosudis oleivorans (strain DSM 6200 / JCM 39069 / Hxd3) (Desulfococcus oleovorans).